A 144-amino-acid polypeptide reads, in one-letter code: Transcription antitermination protein NusB (144 aa).

It belongs to the NusB family.

Its function is as follows. Involved in transcription antitermination. Required for transcription of ribosomal RNA (rRNA) genes. Binds specifically to the boxA antiterminator sequence of the ribosomal RNA (rrn) operons. The chain is Transcription antitermination protein NusB from Streptomyces avermitilis (strain ATCC 31267 / DSM 46492 / JCM 5070 / NBRC 14893 / NCIMB 12804 / NRRL 8165 / MA-4680).